A 434-amino-acid polypeptide reads, in one-letter code: Fez family zinc finger protein 2 (434 aa).

An Engrailed homology 1 repressor motif is present at residues 27–42 (SLAFSIERIMAKTSEP). 6 consecutive C2H2-type zinc fingers follow at residues 253 to 275 (FTCE…MPVH), 281 to 303 (FVCK…KIIH), 309 to 331 (HKCN…IRIH), 337 to 359 (FVCE…KLTH), 365 to 387 (YKCS…MHTH), and 393 to 416 (FTCA…RKLH).

The protein belongs to the krueppel C2H2-type zinc-finger protein family.

Its subcellular location is the nucleus. In terms of biological role, transcription repressor. Component of the regulatory cascade that controls the development of dopaminergic (DA) and serotonergic (5HT) neurons. This Xenopus laevis (African clawed frog) protein is Fez family zinc finger protein 2 (fezf2).